We begin with the raw amino-acid sequence, 687 residues long: DNA-directed RNA polymerase subunit beta' (687 aa).

Residues Cys69, Cys71, Cys87, and Cys90 each contribute to the Zn(2+) site. Mg(2+) is bound by residues Asp491, Asp493, and Asp495.

The protein belongs to the RNA polymerase beta' chain family. RpoC1 subfamily. In plastids the minimal PEP RNA polymerase catalytic core is composed of four subunits: alpha, beta, beta', and beta''. When a (nuclear-encoded) sigma factor is associated with the core the holoenzyme is formed, which can initiate transcription. Mg(2+) is required as a cofactor. It depends on Zn(2+) as a cofactor.

The protein localises to the plastid. The protein resides in the chloroplast. It catalyses the reaction RNA(n) + a ribonucleoside 5'-triphosphate = RNA(n+1) + diphosphate. Its function is as follows. DNA-dependent RNA polymerase catalyzes the transcription of DNA into RNA using the four ribonucleoside triphosphates as substrates. The polypeptide is DNA-directed RNA polymerase subunit beta' (Glycine max (Soybean)).